We begin with the raw amino-acid sequence, 340 residues long: Glyceraldehyde-3-phosphate dehydrogenase, cytosolic (340 aa).

Residues 16-17, Asp38, and Arg85 contribute to the NAD(+) site; that span reads RI. D-glyceraldehyde 3-phosphate contacts are provided by residues 156–158, Thr187, 216–217, and Arg239; these read SCT and TG. Cys157 (nucleophile) is an active-site residue. Asn321 contributes to the NAD(+) binding site.

This sequence belongs to the glyceraldehyde-3-phosphate dehydrogenase family. Homotetramer.

The protein localises to the cytoplasm. It carries out the reaction D-glyceraldehyde 3-phosphate + phosphate + NAD(+) = (2R)-3-phospho-glyceroyl phosphate + NADH + H(+). The protein operates within carbohydrate degradation; glycolysis; pyruvate from D-glyceraldehyde 3-phosphate: step 1/5. Functionally, key enzyme in glycolysis that catalyzes the first step of the pathway by converting D-glyceraldehyde 3-phosphate (G3P) into 3-phospho-D-glyceroyl phosphate. Essential for the maintenance of cellular ATP levels and carbohydrate metabolism. The polypeptide is Glyceraldehyde-3-phosphate dehydrogenase, cytosolic (Ginkgo biloba (Ginkgo)).